The chain runs to 912 residues: Tubulin polyglutamylase TTLL7 (912 aa).

One can recognise a TTL domain in the interval 38–390 (KGIITANVAG…RTSDKRKNLA (353 aa)). ATP-binding positions include Lys-160, 166–167 (MG), 188–191 (QEYI), and 201–203 (KFD). An L-glutamate-binding site is contributed by Arg-227. 249–250 (TN) serves as a coordination point for ATP. Positions 251, 252, and 271 each coordinate L-glutamate. Mg(2+) contacts are provided by Asp-336, Glu-349, and Asn-351. Lys-367 contributes to the L-glutamate binding site. A c-MTBD region region spans residues 388 to 450 (NLAKQKAEAQ…VSQEEHENRH (63 aa)). 2 disordered regions span residues 547–570 (YGSS…ENEK) and 658–688 (PTSA…STNT). A compositionally biased stretch (low complexity) spans 549–563 (SSDSSYDSSSSSSNS). Residues 659–671 (TSASRSHSLNRAS) are compositionally biased toward polar residues.

It belongs to the tubulin--tyrosine ligase family. In terms of assembly, interacts with both alpha- and beta-tubulin (via C-terminal tubulin tails). The cofactor is Mg(2+). Highly expressed in brain, testis and trachea. Expressed in brain, heart, kidney, liver, lung, muscle and trachea. In the brain, highly expressed in hippocampus, thalamus, olfactory bulb and cerebellum cortex, corpus callosum and striatum.

It is found in the cell projection. The protein localises to the cilium. It localises to the cytoplasm. Its subcellular location is the cytoskeleton. The protein resides in the cilium basal body. It is found in the dendrite. The protein localises to the perikaryon. The catalysed reaction is L-glutamyl-[protein] + L-glutamate + ATP = gamma-L-glutamyl-L-glutamyl-[protein] + ADP + phosphate + H(+). The enzyme catalyses (L-glutamyl)(n)-gamma-L-glutamyl-L-glutamyl-[protein] + L-glutamate + ATP = (L-glutamyl)(n+1)-gamma-L-glutamyl-L-glutamyl-[protein] + ADP + phosphate + H(+). Its function is as follows. Polyglutamylase which modifies tubulin, generating polyglutamate side chains of variable lengths on the gamma-carboxyl group of specific glutamate residues within the C-terminal tail of tubulin. Mediates both ATP-dependent initiation and elongation steps of the polyglutamylation reaction. Preferentially modifies the beta-tubulin tail over an alpha-tail. Competes with monoglycylase TTLL3 for modification site on beta-tubulin substrate, thereby creating an anticorrelation between glycylation and glutamylation reactions. Required for neurite growth; responsible for the strong increase in tubulin polyglutamylation during postnatal neuronal maturation. The polypeptide is Tubulin polyglutamylase TTLL7 (Mus musculus (Mouse)).